Reading from the N-terminus, the 164-residue chain is MSLPDKAFPVSWDQFHRDARALAWRLAGLNQTFKAIVCITRGGLVPAAIISRELNIRLIETVCVASYHDYVNQGDMVLLKGIAPELMENGGETVLVVDDLTDTGKTAAQVRTMLPRAHFACVYAKPKGVPTVDTFITEVSQDTWIYFPWDMGFTYQEPIAKGAG.

5-phospho-alpha-D-ribose 1-diphosphate-binding positions include 41 to 42 and 98 to 106; these read RG and DDLTDTGKT. Asp-99 contributes to the Mg(2+) binding site. Residues Asp-102 and Ile-145 each contribute to the guanine site. Positions 102 and 145 each coordinate xanthine. Residues 102-106 and 144-145 each bind GMP; these read DTGKT and WI.

Belongs to the purine/pyrimidine phosphoribosyltransferase family. XGPT subfamily. In terms of assembly, homotetramer. Mg(2+) is required as a cofactor.

The protein resides in the cell inner membrane. The catalysed reaction is GMP + diphosphate = guanine + 5-phospho-alpha-D-ribose 1-diphosphate. It catalyses the reaction XMP + diphosphate = xanthine + 5-phospho-alpha-D-ribose 1-diphosphate. It carries out the reaction IMP + diphosphate = hypoxanthine + 5-phospho-alpha-D-ribose 1-diphosphate. Its pathway is purine metabolism; GMP biosynthesis via salvage pathway; GMP from guanine: step 1/1. The protein operates within purine metabolism; XMP biosynthesis via salvage pathway; XMP from xanthine: step 1/1. Functionally, purine salvage pathway enzyme that catalyzes the transfer of the ribosyl-5-phosphate group from 5-phospho-alpha-D-ribose 1-diphosphate (PRPP) to the N9 position of the 6-oxopurines guanine and xanthine to form the corresponding ribonucleotides GMP (guanosine 5'-monophosphate) and XMP (xanthosine 5'-monophosphate), with the release of PPi. To a lesser extent, also acts on hypoxanthine. The sequence is that of Xanthine-guanine phosphoribosyltransferase from Rhizobium johnstonii (strain DSM 114642 / LMG 32736 / 3841) (Rhizobium leguminosarum bv. viciae).